The sequence spans 602 residues: UvrABC system protein C (602 aa).

Residues 19–97 (EEPGVYRMIG…IKSLAPRYNI (79 aa)) form the GIY-YIG domain. The 36-residue stretch at 206 to 241 (SEVIDDLTARMHAAAERLAFEEAAACRDQVRVLQAV) folds into the UVR domain.

The protein belongs to the UvrC family. In terms of assembly, interacts with UvrB in an incision complex.

The protein localises to the cytoplasm. Functionally, the UvrABC repair system catalyzes the recognition and processing of DNA lesions. UvrC both incises the 5' and 3' sides of the lesion. The N-terminal half is responsible for the 3' incision and the C-terminal half is responsible for the 5' incision. The sequence is that of UvrABC system protein C from Aromatoleum aromaticum (strain DSM 19018 / LMG 30748 / EbN1) (Azoarcus sp. (strain EbN1)).